Here is a 733-residue protein sequence, read N- to C-terminus: Cyclic nucleotide-gated channel (733 aa).

Disordered stretches follow at residues 1–33 (MSTA…PTAS) and 67–95 (PNGN…IEVP). Residues 1–125 (MSTAEPAPDP…PSTDNFYYWT (125 aa)) are Cytoplasmic-facing. Residues 12–25 (NPSTSGLAPTTNGI) show a composition bias toward polar residues. A helical transmembrane segment spans residues 126–148 (CVVTVAYIYNLLFVIARQVFNDL). The Extracellular portion of the chain corresponds to 149–197 (IGPSSQSLCRFYNGTLNSTTQVECTYNMLTNMKEMPTYSQYPDLGWSKY). Residues 198–217 (WHFRMLWVFFDLLMDCVYLI) form a helical membrane-spanning segment. At 218–251 (DTFLNYRMGYMDQGLVVREAEKVTKAYWQSKQYR) the chain is on the cytoplasmic side. A helical transmembrane segment spans residues 252–265 (IDGISLIPLDYILG). The Extracellular segment spans residues 266–276 (WPIPYINWRGL). The helical transmembrane segment at 277–287 (PILRLNRLIRY) threads the bilayer. Over 288–308 (KRVRNCLERTETRSSMPNAFR) the chain is Cytoplasmic. A helical membrane pass occupies residues 309–331 (VVVVVWYIVIIIHWNACLYFWIS). The Extracellular segment spans residues 332 to 362 (EWIGLGTDAWVYGHLNKQSLPDDITDTLLRR). The next 2 helical transmembrane spans lie at 363-385 (YVYS…SPVR) and 386-411 (NIEY…GNVG). The tract at residues 376 to 379 (TIGE) is selectivity filter. A Na(+)-binding site is contributed by E379. Topologically, residues 412 to 733 (SMISNMSAAR…TGTESESLLK (322 aa)) are cytoplasmic. The segment at 419-496 (AARTEFQNKM…TLRKVRIFQD (78 aa)) is C-linker. The interval 493–607 (IFQDCEAGLL…ALREYPDARK (115 aa)) is cyclic nucleotide-binding domain. A 3',5'-cyclic GMP-binding site is contributed by G559. E560 provides a ligand contact to 3',5'-cyclic AMP. 5 residues coordinate 3',5'-cyclic GMP: S562, R575, T576, K619, and D620. A 3',5'-cyclic AMP-binding site is contributed by R575. Residues 694-733 (SIDGGDISTDGVDERVRPPRLRQTKTIDLPTGTESESLLK) are disordered.

The protein belongs to the cyclic nucleotide-gated cation channel (TC 1.A.1.5) family. As to quaternary structure, homotetramer. Expressed at the sensory endings of thermosensory, gustatory, and olfactory neurons.

It is found in the cell membrane. Its subcellular location is the cell projection. It localises to the cilium. It carries out the reaction Ca(2+)(in) = Ca(2+)(out). It catalyses the reaction Na(+)(in) = Na(+)(out). The enzyme catalyses K(+)(in) = K(+)(out). Pore-forming subunit of the cyclic nucleotide-gated channel. Required for normal thermosensation and chemosensation sensory behavior. Required, downstream of receptor-type guanylate cyclase gcy-9, for CO2-mediated responses in BAG neurons. Required, downstream of receptor-type guanylate cyclase gcy-14, for alkaline pH-mediated responses in ASE-left (ASEL) neurons. Involved in the development of ASJ sensory neuron axon during late larval stages and in the maintenance of normal axon morphology in the adult. Regulates dauer formation. Required for the calcium flux to the cytoplasm in the ASJ sensory neurons upon the onset and removal of a nitric oxide (NO) stimulus, thereby promoting the ASJ-mediated behavioral avoidance response to NO-producing organisms like P.aeruginosa. In ASI and ASJ sensory neurons, controls behavioral response to P.aeruginosa by up-regulating the transcription of daf-7, a member of the TGF-beta family. In AWB and AWC sensory neurons, mediates the recognition of food odors which subsequently allows for the detection of preferred food sources. In AWC neurons, acts to promote expression of srsx-3, a member of the GPCR family. Binding to cGMP results in conformational changes at the hydrophobic gate that converts the protein from an inactive closed state to an active open state. The protein is Cyclic nucleotide-gated channel (tax-4) of Caenorhabditis elegans.